Consider the following 142-residue polypeptide: Semaphorin-like protein VACWR164 (142 aa).

Residues 1 to 142 (MNTIKQSFST…MPQMKKILKM (142 aa)) enclose the Sema domain.

Belongs to the semaphorin family.

The protein is Semaphorin-like protein VACWR164 of Bos taurus (Bovine).